The following is a 208-amino-acid chain: MRVVLASNNAKKLVELQRLFAALPIELVTQGSLGIAEAEEPHHTFVENALAKARHAAAEAGCAAIADDSGLCVDALGGAPGVVSAHYATVVLPAADREAQRAVQDAANNALLLDRLQGQADRRASFVSTLVALRHADDPQPLIAFGRWQGEILDAPRGEAGFGYDPLMFIPALGRSVAQMPAEEKSRCSHRALAARDMLALMRAHWLA.

7-12 (SNNAKK) provides a ligand contact to substrate. Mg(2+) contacts are provided by Glu-39 and Asp-68. The Proton acceptor role is filled by Asp-68. Residues Ser-69, 162 to 165 (FGYD), Lys-185, and 190 to 191 (HR) each bind substrate.

The protein belongs to the HAM1 NTPase family. Homodimer. The cofactor is Mg(2+).

The enzyme catalyses XTP + H2O = XMP + diphosphate + H(+). The catalysed reaction is dITP + H2O = dIMP + diphosphate + H(+). It catalyses the reaction ITP + H2O = IMP + diphosphate + H(+). Functionally, pyrophosphatase that catalyzes the hydrolysis of nucleoside triphosphates to their monophosphate derivatives, with a high preference for the non-canonical purine nucleotides XTP (xanthosine triphosphate), dITP (deoxyinosine triphosphate) and ITP. Seems to function as a house-cleaning enzyme that removes non-canonical purine nucleotides from the nucleotide pool, thus preventing their incorporation into DNA/RNA and avoiding chromosomal lesions. The protein is dITP/XTP pyrophosphatase of Methylibium petroleiphilum (strain ATCC BAA-1232 / LMG 22953 / PM1).